A 285-amino-acid chain; its full sequence is Small ribosomal subunit biogenesis GTPase RsgA (285 aa).

Residues 61–215 (KNQLIRPKVA…IIDSPGFSSF (155 aa)) form the CP-type G domain. Residues 110–113 (TKID) and 159–167 (GQTGVGKTS) contribute to the GTP site. Zn(2+)-binding residues include C239, C244, H246, and C254.

The protein belongs to the TRAFAC class YlqF/YawG GTPase family. RsgA subfamily. As to quaternary structure, monomer. Associates with 30S ribosomal subunit, binds 16S rRNA. Requires Zn(2+) as cofactor.

It is found in the cytoplasm. Functionally, one of several proteins that assist in the late maturation steps of the functional core of the 30S ribosomal subunit. Helps release RbfA from mature subunits. May play a role in the assembly of ribosomal proteins into the subunit. Circularly permuted GTPase that catalyzes slow GTP hydrolysis, GTPase activity is stimulated by the 30S ribosomal subunit. This chain is Small ribosomal subunit biogenesis GTPase RsgA, found in Mesomycoplasma hyopneumoniae (strain J / ATCC 25934 / NCTC 10110) (Mycoplasma hyopneumoniae).